We begin with the raw amino-acid sequence, 1412 residues long: DNA-directed RNA polymerase subunit beta' (1412 aa).

Residues cysteine 70, cysteine 72, cysteine 85, and cysteine 88 each contribute to the Zn(2+) site. Positions 460, 462, and 464 each coordinate Mg(2+). Residues cysteine 819, cysteine 893, cysteine 900, and cysteine 903 each coordinate Zn(2+). The disordered stretch occupies residues 1392–1412; it reads EEAFEFGTPSAPAEEPQHPAE.

It belongs to the RNA polymerase beta' chain family. As to quaternary structure, the RNAP catalytic core consists of 2 alpha, 1 beta, 1 beta' and 1 omega subunit. When a sigma factor is associated with the core the holoenzyme is formed, which can initiate transcription. Mg(2+) is required as a cofactor. The cofactor is Zn(2+).

The enzyme catalyses RNA(n) + a ribonucleoside 5'-triphosphate = RNA(n+1) + diphosphate. Functionally, DNA-dependent RNA polymerase catalyzes the transcription of DNA into RNA using the four ribonucleoside triphosphates as substrates. The polypeptide is DNA-directed RNA polymerase subunit beta' (Burkholderia mallei (strain NCTC 10247)).